We begin with the raw amino-acid sequence, 333 residues long: Holliday junction branch migration complex subunit RuvB (333 aa).

The segment at 1 to 182 (MDERLLSGES…FGVLSRLEYY (182 aa)) is large ATPase domain (RuvB-L). Residues Leu-21, Arg-22, Gly-63, Lys-66, Thr-67, Thr-68, 129 to 131 (EDF), Arg-172, Tyr-182, and Arg-219 each bind ATP. A Mg(2+)-binding site is contributed by Thr-67. A small ATPAse domain (RuvB-S) region spans residues 183–253 (TVDQLSAIVE…ITQMALELLQ (71 aa)). Positions 256-333 (KLGLDHIDHK…EHFGMEMPKV (78 aa)) are head domain (RuvB-H). DNA contacts are provided by Arg-311 and Arg-316.

The protein belongs to the RuvB family. Homohexamer. Forms an RuvA(8)-RuvB(12)-Holliday junction (HJ) complex. HJ DNA is sandwiched between 2 RuvA tetramers; dsDNA enters through RuvA and exits via RuvB. An RuvB hexamer assembles on each DNA strand where it exits the tetramer. Each RuvB hexamer is contacted by two RuvA subunits (via domain III) on 2 adjacent RuvB subunits; this complex drives branch migration. In the full resolvosome a probable DNA-RuvA(4)-RuvB(12)-RuvC(2) complex forms which resolves the HJ.

The protein localises to the cytoplasm. It catalyses the reaction ATP + H2O = ADP + phosphate + H(+). The RuvA-RuvB-RuvC complex processes Holliday junction (HJ) DNA during genetic recombination and DNA repair, while the RuvA-RuvB complex plays an important role in the rescue of blocked DNA replication forks via replication fork reversal (RFR). RuvA specifically binds to HJ cruciform DNA, conferring on it an open structure. The RuvB hexamer acts as an ATP-dependent pump, pulling dsDNA into and through the RuvAB complex. RuvB forms 2 homohexamers on either side of HJ DNA bound by 1 or 2 RuvA tetramers; 4 subunits per hexamer contact DNA at a time. Coordinated motions by a converter formed by DNA-disengaged RuvB subunits stimulates ATP hydrolysis and nucleotide exchange. Immobilization of the converter enables RuvB to convert the ATP-contained energy into a lever motion, pulling 2 nucleotides of DNA out of the RuvA tetramer per ATP hydrolyzed, thus driving DNA branch migration. The RuvB motors rotate together with the DNA substrate, which together with the progressing nucleotide cycle form the mechanistic basis for DNA recombination by continuous HJ branch migration. Branch migration allows RuvC to scan DNA until it finds its consensus sequence, where it cleaves and resolves cruciform DNA. The polypeptide is Holliday junction branch migration complex subunit RuvB (Bacillus cereus (strain 03BB102)).